Reading from the N-terminus, the 163-residue chain is Staphylokinase (163 aa).

Positions 1 to 27 (MLKRSLLFLTVLLLLFSFSSITNEVSA) are cleaved as a signal peptide.

Belongs to the staphylokinase family.

It is found in the secreted. Its function is as follows. Potent plasminogen activator that converts plasminogen into plasmin. It forms a 1:1 complex with plasmin, which in turn activates other plasminogen molecules. This chain is Staphylokinase (sak), found in Staphylococcus aureus (Bacteriophage P42D).